The primary structure comprises 871 residues: Coatomer subunit gamma-2 (871 aa).

Positions M1 to E11 are enriched in basic and acidic residues. The tract at residues M1–R20 is disordered. 6 HEAT repeats span residues T64–D101, R283–S320, A321–S355, S356–R392, S395–E430, and P467–N504. T594 bears the Phosphothreonine mark.

Belongs to the COPG family. Oligomeric complex. Binds to CDC42. Interacts with JAGN1. Interacts with TMED10 (via cytoplasmic domain).

Its subcellular location is the cytoplasm. It is found in the cytosol. The protein localises to the golgi apparatus membrane. The protein resides in the cytoplasmic vesicle. It localises to the COPI-coated vesicle membrane. In terms of biological role, the coatomer is a cytosolic protein complex that binds to dilysine motifs and reversibly associates with Golgi non-clathrin-coated vesicles, which further mediate biosynthetic protein transport from the ER, via the Golgi up to the trans Golgi network. Coatomer complex is required for budding from Golgi membranes, and is essential for the retrograde Golgi-to-ER transport of dilysine-tagged proteins. In mammals, the coatomer can only be recruited by membranes associated to ADP-ribosylation factors (ARFs), which are small GTP-binding proteins; the complex also influences the Golgi structural integrity, as well as the processing, activity, and endocytic recycling of LDL receptors. In Bos taurus (Bovine), this protein is Coatomer subunit gamma-2 (COPG2).